Reading from the N-terminus, the 414-residue chain is Histidine--tRNA ligase (414 aa).

It belongs to the class-II aminoacyl-tRNA synthetase family. Homodimer.

The protein localises to the cytoplasm. It carries out the reaction tRNA(His) + L-histidine + ATP = L-histidyl-tRNA(His) + AMP + diphosphate + H(+). This chain is Histidine--tRNA ligase, found in Synechococcus sp. (strain RCC307).